Here is a 304-residue protein sequence, read N- to C-terminus: Ornithine carbamoyltransferase (304 aa).

Carbamoyl phosphate is bound by residues S53 to T56, Q80, R104, and H131 to Q134. Residues N162, D219, and S223–M224 contribute to the L-ornithine site. Residues C259–L260 and R287 each bind carbamoyl phosphate.

The protein belongs to the aspartate/ornithine carbamoyltransferase superfamily. OTCase family.

Its subcellular location is the cytoplasm. The catalysed reaction is carbamoyl phosphate + L-ornithine = L-citrulline + phosphate + H(+). It functions in the pathway amino-acid biosynthesis; L-arginine biosynthesis; L-arginine from L-ornithine and carbamoyl phosphate: step 1/3. Its function is as follows. Reversibly catalyzes the transfer of the carbamoyl group from carbamoyl phosphate (CP) to the N(epsilon) atom of ornithine (ORN) to produce L-citrulline. The protein is Ornithine carbamoyltransferase of Herminiimonas arsenicoxydans.